A 373-amino-acid chain; its full sequence is Chorismate synthase (373 aa).

NADP(+) is bound at residue Arg-46. FMN-binding positions include Arg-123–Ser-125, Asn-250–Ala-251, Gly-295, Lys-310–Ser-314, and Arg-337.

Belongs to the chorismate synthase family. Requires FMNH2 as cofactor.

The catalysed reaction is 5-O-(1-carboxyvinyl)-3-phosphoshikimate = chorismate + phosphate. It participates in metabolic intermediate biosynthesis; chorismate biosynthesis; chorismate from D-erythrose 4-phosphate and phosphoenolpyruvate: step 7/7. Functionally, catalyzes the anti-1,4-elimination of the C-3 phosphate and the C-6 proR hydrogen from 5-enolpyruvylshikimate-3-phosphate (EPSP) to yield chorismate, which is the branch point compound that serves as the starting substrate for the three terminal pathways of aromatic amino acid biosynthesis. This reaction introduces a second double bond into the aromatic ring system. The polypeptide is Chorismate synthase (Methanococcus aeolicus (strain ATCC BAA-1280 / DSM 17508 / OCM 812 / Nankai-3)).